We begin with the raw amino-acid sequence, 203 residues long: Glycerol-3-phosphate acyltransferase (203 aa).

Topologically, residues 1 to 3 are periplasmic; the sequence is MSA. A helical transmembrane segment spans residues 4-24; the sequence is IAPGMILFAYLCGSISSAILV. The Cytoplasmic portion of the chain corresponds to 25–52; sequence CRIAGLPDPRESGSGNPGATNVLRIGGK. The helical transmembrane segment at 53 to 73 threads the bilayer; that stretch reads GAAVAVLIFDILKGMLPVWGA. At 74–80 the chain is on the periplasmic side; the sequence is YALGVTP. The helical transmembrane segment at 81 to 101 threads the bilayer; sequence FWLGLIAIAACLGHIWPVFFG. Topologically, residues 102-111 are cytoplasmic; that stretch reads FKGGKGVATA. The chain crosses the membrane as a helical span at residues 112–132; it reads FGAIAPIGWDLTGVMAGTWLL. Residues 133–137 are Periplasmic-facing; the sequence is TVLLS. Residues 138–158 form a helical membrane-spanning segment; that stretch reads GYSSLGAIVSALIAPFYVWWF. Topologically, residues 159–203 are cytoplasmic; the sequence is KPQFTFPVSMLSCLILLRHHDNIQRLWRRQETKIWTKLKKKRQKD.

Belongs to the PlsY family. As to quaternary structure, probably interacts with PlsX.

It is found in the cell inner membrane. The enzyme catalyses sn-glycerol 3-phosphate + an acyl-CoA = a 1-acyl-sn-glycero-3-phosphate + CoA. It carries out the reaction a fatty acyl-[ACP] + sn-glycerol 3-phosphate = a 1-acyl-sn-glycero-3-phosphate + holo-[ACP]. It functions in the pathway lipid metabolism; phospholipid metabolism. Its function is as follows. Catalyzes the transfer of an acyl group from acyl-ACP to glycerol-3-phosphate (G3P) to form lysophosphatidic acid (LPA). This enzyme can also utilize acyl-CoA as fatty acyl donor, but not acyl-PO(4). In Salmonella agona (strain SL483), this protein is Glycerol-3-phosphate acyltransferase.